A 288-amino-acid polypeptide reads, in one-letter code: Geranylgeranyl diphosphate synthase (288 aa).

Arginine 43 and histidine 73 together coordinate isopentenyl diphosphate. Mg(2+) contacts are provided by aspartate 80 and aspartate 86. Arginine 91 provides a ligand contact to (2E,6E)-farnesyl diphosphate. Arginine 92 provides a ligand contact to isopentenyl diphosphate. Residues lysine 170, threonine 171, and glutamine 205 each coordinate (2E,6E)-farnesyl diphosphate.

It belongs to the FPP/GGPP synthase family. Mg(2+) is required as a cofactor.

It catalyses the reaction isopentenyl diphosphate + (2E,6E)-farnesyl diphosphate = (2E,6E,10E)-geranylgeranyl diphosphate + diphosphate. It participates in isoprenoid biosynthesis; geranylgeranyl diphosphate biosynthesis; geranylgeranyl diphosphate from farnesyl diphosphate and isopentenyl diphosphate: step 1/1. Its function is as follows. Catalyzes the condensation of farnesyl diphosphate (FPP) and isopentenyl diphosphate (IPP) to yield geranylgeranyl diphosphate (GGPP) needed for biosynthesis of carotenoids and diterpenes. In Cereibacter sphaeroides (strain ATCC 17023 / DSM 158 / JCM 6121 / CCUG 31486 / LMG 2827 / NBRC 12203 / NCIMB 8253 / ATH 2.4.1.) (Rhodobacter sphaeroides), this protein is Geranylgeranyl diphosphate synthase (crtE).